Reading from the N-terminus, the 142-residue chain is Transcriptional regulator MraZ (142 aa).

2 consecutive SpoVT-AbrB domains span residues 5–51 (ASAL…PRPE) and 77–120 (AMDV…DSQT).

This sequence belongs to the MraZ family. As to quaternary structure, forms oligomers.

The protein resides in the cytoplasm. Its subcellular location is the nucleoid. The protein is Transcriptional regulator MraZ of Burkholderia cenocepacia (strain HI2424).